The chain runs to 118 residues: Small ribosomal subunit protein uS13 (118 aa).

The disordered stretch occupies residues 91 to 118 (HRRSLPVRGQRTKTNARTRKGPRKPIRK).

It belongs to the universal ribosomal protein uS13 family. In terms of assembly, part of the 30S ribosomal subunit. Forms a loose heterodimer with protein S19. Forms two bridges to the 50S subunit in the 70S ribosome.

Functionally, located at the top of the head of the 30S subunit, it contacts several helices of the 16S rRNA. In the 70S ribosome it contacts the 23S rRNA (bridge B1a) and protein L5 of the 50S subunit (bridge B1b), connecting the 2 subunits; these bridges are implicated in subunit movement. Contacts the tRNAs in the A and P-sites. The polypeptide is Small ribosomal subunit protein uS13 (Marinomonas sp. (strain MWYL1)).